Reading from the N-terminus, the 75-residue chain is Small ribosomal subunit protein bS18 (75 aa).

The protein belongs to the bacterial ribosomal protein bS18 family. Part of the 30S ribosomal subunit. Forms a tight heterodimer with protein bS6.

Functionally, binds as a heterodimer with protein bS6 to the central domain of the 16S rRNA, where it helps stabilize the platform of the 30S subunit. This is Small ribosomal subunit protein bS18 from Shewanella halifaxensis (strain HAW-EB4).